Reading from the N-terminus, the 390-residue chain is Chorismate synthase (390 aa).

2 residues coordinate NADP(+): arginine 39 and arginine 45. Residues 132 to 134, 253 to 254, glycine 298, 313 to 317, and arginine 339 each bind FMN; these read RSS, NA, and KPIPT.

The protein belongs to the chorismate synthase family. In terms of assembly, homotetramer. FMNH2 serves as cofactor.

It catalyses the reaction 5-O-(1-carboxyvinyl)-3-phosphoshikimate = chorismate + phosphate. It participates in metabolic intermediate biosynthesis; chorismate biosynthesis; chorismate from D-erythrose 4-phosphate and phosphoenolpyruvate: step 7/7. In terms of biological role, catalyzes the anti-1,4-elimination of the C-3 phosphate and the C-6 proR hydrogen from 5-enolpyruvylshikimate-3-phosphate (EPSP) to yield chorismate, which is the branch point compound that serves as the starting substrate for the three terminal pathways of aromatic amino acid biosynthesis. This reaction introduces a second double bond into the aromatic ring system. The polypeptide is Chorismate synthase (Bacillus subtilis (strain 168)).